The chain runs to 319 residues: Probable cell division protein WhiA (319 aa).

The H-T-H motif DNA-binding region spans 278-311 (SLKELGQMLNPPVGKSGVNHRLRRLESLAEAFSR).

It belongs to the WhiA family.

Functionally, involved in cell division and chromosome segregation. This chain is Probable cell division protein WhiA, found in Heliobacterium modesticaldum (strain ATCC 51547 / Ice1).